A 130-amino-acid chain; its full sequence is MARPTKKTGPKKQKKNIPTGVAHIQSTFNNTIVTIADTKGDVISWASAGSSGFKGAKKGTPFAAQTAADNAARRAIEQGMRQLEVMVSGPGAGRETAIRALQGAGLEITLIRDVTPIPHNGCRPPKRRRV.

The protein belongs to the universal ribosomal protein uS11 family. In terms of assembly, part of the 30S ribosomal subunit. Interacts with proteins S7 and S18. Binds to IF-3.

In terms of biological role, located on the platform of the 30S subunit, it bridges several disparate RNA helices of the 16S rRNA. Forms part of the Shine-Dalgarno cleft in the 70S ribosome. The protein is Small ribosomal subunit protein uS11 of Microcystis aeruginosa (strain NIES-843 / IAM M-2473).